Consider the following 198-residue polypeptide: MAALTAENFAALQSLLKASSKDVVRQLCQESFSSSALGSKNLLDVTCSSLSVTQEEAEQLLQALHRLTRLAVFRDLSSAEAILALFPENFHQNLKNLLTKIILEHVSAWRAEAQVNQISLPRLVDLDWRVDIKTSSDSISRMAVPTCLLQMKIQEDPSLCGDRPSVSDVTVELSKETLDTMLDGLGRIRDQLSAVASK.

Alanine 2 is subject to N-acetylalanine. The 75-residue stretch at 122-196 (RLVDLDWRVD…RIRDQLSAVA (75 aa)) folds into the COMM domain.

This sequence belongs to the COMM domain-containing protein 9 family. Component of the commander complex consisting of the CCC subcomplex and the retriever subcomplex. Component of the CCC (COMMD/CCDC22/CCDC93) subcomplex consisting of COMMD1, COMMD2, COMMD3, COMMD4, COMMD5, COMMD6, COMMD7, COMMD8, COMMD9, COMMD10, CCDC22 and CCDC93; within the complex forms a heterodimer with COMMD7. Interacts with RELB and NFKB1/p105. Interacts with CCDC22, CCDC93, SCNN1B, CUL1.

The protein localises to the nucleus. The protein resides in the cytoplasmic vesicle. In terms of biological role, scaffold protein in the commander complex that is essential for endosomal recycling of transmembrane cargos; the commander complex is composed of the CCC subcomplex and the retriever subcomplex. May modulate activity of cullin-RING E3 ubiquitin ligase (CRL) complexes. May down-regulate activation of NF-kappa-B. Modulates Na(+) transport in epithelial cells by regulation of apical cell surface expression of amiloride-sensitive sodium channel (ENaC) subunits. This Bos taurus (Bovine) protein is COMM domain-containing protein 9 (COMMD9).